We begin with the raw amino-acid sequence, 37 residues long: Large ribosomal subunit protein bL36c (37 aa).

This sequence belongs to the bacterial ribosomal protein bL36 family.

It is found in the plastid. It localises to the chloroplast. The chain is Large ribosomal subunit protein bL36c from Physcomitrium patens (Spreading-leaved earth moss).